We begin with the raw amino-acid sequence, 450 residues long: Probable ECA polymerase (450 aa).

A run of 11 helical transmembrane segments spans residues 6–26 (FSGL…LTWF), 37–57 (VFFS…TSVL), 63–83 (VGVA…CFYA), 118–138 (VILM…NGFL), 155–175 (GVAL…VYFL), 181–201 (AWLF…MIVG), 207–227 (IIIA…ISLW), 228–248 (MLAA…LKRY), 341–361 (LVVM…GLII), 378–398 (YKAA…IVLA), and 410–430 (VFFI…YWLF).

Belongs to the WzyE family. As to quaternary structure, probably part of a complex composed of WzxE, WzyE and WzzE.

Its subcellular location is the cell inner membrane. The protein operates within bacterial outer membrane biogenesis; enterobacterial common antigen biosynthesis. Its function is as follows. Probably involved in the polymerization of enterobacterial common antigen (ECA) trisaccharide repeat units. This is Probable ECA polymerase from Escherichia coli O17:K52:H18 (strain UMN026 / ExPEC).